The sequence spans 363 residues: NADH-quinone oxidoreductase subunit H (363 aa).

A run of 10 helical transmembrane segments spans residues 29–49, 62–82, 94–114, 127–147, 166–186, 202–222, 239–257, 264–286, 293–313, and 339–359; these read VLKILMIAIPLIVSVAFYVVW, GPMYVGMGLFQAFADVFKLLF, AIFVIAPLLTLAPSFAAWAVV, VGLLYLLAMTSLGVYGIILAG, VVSYEIAMGFALVGVMIAAGS, FFDWFLIPLFPLFIVYWVSGV, IVAGHMVEYSGSVFALFFL, ILVSFLISIFFLGGWLSPIQGWV, LIDWVWNGGWPWLLLKVLFFA, and FIPLTIVWIAVTALMVFSGVI.

Belongs to the complex I subunit 1 family. As to quaternary structure, NDH-1 is composed of 14 different subunits. Subunits NuoA, H, J, K, L, M, N constitute the membrane sector of the complex.

The protein localises to the cell inner membrane. The enzyme catalyses a quinone + NADH + 5 H(+)(in) = a quinol + NAD(+) + 4 H(+)(out). Its function is as follows. NDH-1 shuttles electrons from NADH, via FMN and iron-sulfur (Fe-S) centers, to quinones in the respiratory chain. The immediate electron acceptor for the enzyme in this species is believed to be ubiquinone. Couples the redox reaction to proton translocation (for every two electrons transferred, four hydrogen ions are translocated across the cytoplasmic membrane), and thus conserves the redox energy in a proton gradient. This subunit may bind ubiquinone. The polypeptide is NADH-quinone oxidoreductase subunit H (Xylella fastidiosa (strain Temecula1 / ATCC 700964)).